The primary structure comprises 100 residues: MTNRMELSGTIAKPPIRSKSPGGIEHCRFWLEHRSTVIEADLPRQVYCRMPVVVSGLRSQAITQNLVQGSNIKVSGFVAYQTGRNGVGKLVLHADNITQI.

Positions 1 to 100 (MTNRMELSGT…VLHADNITQI (100 aa)) constitute an SSB domain.

The protein belongs to the PriB family. Homodimer. Interacts with PriA and DnaT. Component of the replication restart primosome. Primosome assembly occurs via a 'hand-off' mechanism. PriA binds to replication forks, subsequently PriB then DnaT bind; DnaT then displaces ssDNA to generate the helicase loading substrate.

Functionally, involved in the restart of stalled replication forks, which reloads the replicative helicase on sites other than the origin of replication; the PriA-PriB pathway is the major replication restart pathway. During primosome assembly it facilitates complex formation between PriA and DnaT on DNA; stabilizes PriA on DNA. Stimulates the DNA unwinding activity of PriA helicase. This is Replication restart protein PriB from Vibrio parahaemolyticus serotype O3:K6 (strain RIMD 2210633).